We begin with the raw amino-acid sequence, 859 residues long: ATP-dependent DNA helicase PIF1 (859 aa).

A mitochondrion-targeting transit peptide spans 1–45; that stretch reads MPKWIRSTLNHIIPRRPFICSFNSFLLLKNVSHAKLSFSMSSRGF. Phosphoserine occurs at positions 70 and 72. Over residues 142–157 the composition is skewed to polar residues; that stretch reads NSFDQSSQKKSRSTGF. Positions 142 to 183 are disordered; it reads NSFDQSSQKKSRSTGFKNPLRPALKKESSFDELQNSSISQER. Residue serine 169 is modified to Phosphoserine. A compositionally biased stretch (polar residues) spans 172–182; it reads DELQNSSISQE. 258–265 contributes to the ATP binding site; sequence GSAGTGKS. A Phosphoserine modification is found at serine 584. A DNA-binding region spans residues 727 to 746; the sequence is QAYVALSRAVSREGLQVLNF. Residues 782 to 859 form a disordered region; sequence KRKLDYAPGP…GQDTEDHILE (78 aa). Over residues 800–809 the composition is skewed to low complexity; it reads KSNSPAPISA. The span at 844 to 859 shows a compositional bias: basic and acidic residues; the sequence is VSDEPRGQDTEDHILE.

The protein belongs to the helicase family. PIF1 subfamily. As to quaternary structure, monomer in solution. DNA binding induces dimerization. Associates with mitochondrial and telomeric DNA. Binding to mtDNA is non-specific and the protein seems to coat the entire mtDNA molecule. Binds to the telomerase RNA TLC1. Interacts with the mitochondrial single-strand DNA-binding protein RIM1. Mg(2+) serves as cofactor. Mn(2+) is required as a cofactor. In terms of processing, phosphorylated. Undergoes RAD53-dependent phosphorylation in response to loss of mtDNA.

It is found in the nucleus. Its subcellular location is the nucleolus. The protein localises to the mitochondrion inner membrane. The catalysed reaction is Couples ATP hydrolysis with the unwinding of duplex DNA at the replication fork by translocating in the 5'-3' direction. This creates two antiparallel DNA single strands (ssDNA). The leading ssDNA polymer is the template for DNA polymerase III holoenzyme which synthesizes a continuous strand.. It catalyses the reaction ATP + H2O = ADP + phosphate + H(+). In terms of biological role, DNA-dependent ATPase and 5'-3' DNA helicase required for the maintenance of both mitochondrial and nuclear genome stability. Efficiently unwinds G-quadruplex (G4) DNA structures and forked RNA-DNA hybrids. Appears to move along DNA in single nucleotide or base pair steps, powered by hydrolysis of 1 molecule of ATP. Processes at an unwinding rate of about 75 bp/s. Resolves G4 structures, preventing replication pausing and double-strand breaks (DSBs) at G4 motifs. Involved in the maintenance of telomeric DNA. Inhibits telomere elongation, de novo telomere formation and telomere addition to DSBs via catalytic inhibition of telomerase. Reduces the processivity of telomerase by displacing active telomerase from DNA ends. Releases telomerase by unwinding the short telomerase RNA/telomeric DNA hybrid that is the intermediate in the telomerase reaction. Involved in the maintenance of ribosomal (rDNA). Required for efficient fork arrest at the replication fork barrier within rDNA. Involved in the maintenance of mitochondrial (mtDNA). Required to maintain mtDNA under conditions that introduce dsDNA breaks in mtDNA, either preventing or repairing dsDNA breaks. May inhibit replication progression to allow time for repair. May have a general role in chromosomal replication by affecting Okazaki fragment maturation. May have a role in conjunction with DNA2 helicase/nuclease in 5'-flap extension during Okazaki fragment processing. This chain is ATP-dependent DNA helicase PIF1, found in Saccharomyces cerevisiae (strain YJM789) (Baker's yeast).